A 348-amino-acid polypeptide reads, in one-letter code: Holliday junction branch migration complex subunit RuvB (348 aa).

Residues 4–184 are large ATPase domain (RuvB-L); sequence ADRLIAASGR…FGIVQRLEFY (181 aa). ATP is bound by residues isoleucine 23, arginine 24, glycine 65, lysine 68, threonine 69, threonine 70, 131 to 133, arginine 174, tyrosine 184, and arginine 221; that span reads EDF. A Mg(2+)-binding site is contributed by threonine 69. The small ATPAse domain (RuvB-S) stretch occupies residues 185-255; that stretch reads SDKDLATIVS…VADMALNLLD (71 aa). The interval 258–348 is head domain (RuvB-H); the sequence is ERGFDHSDRR…GGDFSEPGDE (91 aa). Residues arginine 294, arginine 313, and arginine 318 each coordinate DNA.

Belongs to the RuvB family. Homohexamer. Forms an RuvA(8)-RuvB(12)-Holliday junction (HJ) complex. HJ DNA is sandwiched between 2 RuvA tetramers; dsDNA enters through RuvA and exits via RuvB. An RuvB hexamer assembles on each DNA strand where it exits the tetramer. Each RuvB hexamer is contacted by two RuvA subunits (via domain III) on 2 adjacent RuvB subunits; this complex drives branch migration. In the full resolvosome a probable DNA-RuvA(4)-RuvB(12)-RuvC(2) complex forms which resolves the HJ.

It localises to the cytoplasm. It carries out the reaction ATP + H2O = ADP + phosphate + H(+). Functionally, the RuvA-RuvB-RuvC complex processes Holliday junction (HJ) DNA during genetic recombination and DNA repair, while the RuvA-RuvB complex plays an important role in the rescue of blocked DNA replication forks via replication fork reversal (RFR). RuvA specifically binds to HJ cruciform DNA, conferring on it an open structure. The RuvB hexamer acts as an ATP-dependent pump, pulling dsDNA into and through the RuvAB complex. RuvB forms 2 homohexamers on either side of HJ DNA bound by 1 or 2 RuvA tetramers; 4 subunits per hexamer contact DNA at a time. Coordinated motions by a converter formed by DNA-disengaged RuvB subunits stimulates ATP hydrolysis and nucleotide exchange. Immobilization of the converter enables RuvB to convert the ATP-contained energy into a lever motion, pulling 2 nucleotides of DNA out of the RuvA tetramer per ATP hydrolyzed, thus driving DNA branch migration. The RuvB motors rotate together with the DNA substrate, which together with the progressing nucleotide cycle form the mechanistic basis for DNA recombination by continuous HJ branch migration. Branch migration allows RuvC to scan DNA until it finds its consensus sequence, where it cleaves and resolves cruciform DNA. The polypeptide is Holliday junction branch migration complex subunit RuvB (Pseudomonas putida (strain GB-1)).